A 439-amino-acid polypeptide reads, in one-letter code: ATP-dependent protease ATPase subunit HslU (439 aa).

ATP contacts are provided by residues Ile-17, 59 to 64, Asp-251, Glu-317, and Arg-389; that span reads GVGKTE.

Belongs to the ClpX chaperone family. HslU subfamily. In terms of assembly, a double ring-shaped homohexamer of HslV is capped on each side by a ring-shaped HslU homohexamer. The assembly of the HslU/HslV complex is dependent on binding of ATP.

It localises to the cytoplasm. Its function is as follows. ATPase subunit of a proteasome-like degradation complex; this subunit has chaperone activity. The binding of ATP and its subsequent hydrolysis by HslU are essential for unfolding of protein substrates subsequently hydrolyzed by HslV. HslU recognizes the N-terminal part of its protein substrates and unfolds these before they are guided to HslV for hydrolysis. The chain is ATP-dependent protease ATPase subunit HslU from Campylobacter jejuni subsp. jejuni serotype O:23/36 (strain 81-176).